We begin with the raw amino-acid sequence, 276 residues long: Ribosomal RNA small subunit methyltransferase A (276 aa).

6 residues coordinate S-adenosyl-L-methionine: Asn27, Leu29, Gly54, Glu75, Asp101, and Asn122.

It belongs to the class I-like SAM-binding methyltransferase superfamily. rRNA adenine N(6)-methyltransferase family. RsmA subfamily.

Its subcellular location is the cytoplasm. The catalysed reaction is adenosine(1518)/adenosine(1519) in 16S rRNA + 4 S-adenosyl-L-methionine = N(6)-dimethyladenosine(1518)/N(6)-dimethyladenosine(1519) in 16S rRNA + 4 S-adenosyl-L-homocysteine + 4 H(+). Specifically dimethylates two adjacent adenosines (A1518 and A1519) in the loop of a conserved hairpin near the 3'-end of 16S rRNA in the 30S particle. May play a critical role in biogenesis of 30S subunits. The protein is Ribosomal RNA small subunit methyltransferase A of Brucella melitensis biotype 1 (strain ATCC 23456 / CCUG 17765 / NCTC 10094 / 16M).